The following is a 71-amino-acid chain: MPTKTITITLEAYERLKREKREGESFSDVIIRLTEKRRDLLEFAGKWKDSGEEIEKIILEGRKEFDKHVLS.

Belongs to the UPF0330 family.

In terms of biological role, possibly the antitoxin component of a type II toxin-antitoxin (TA) system. Its cognate toxin is VapC15 (Potential). The chain is Putative antitoxin VapB15 (vapB15) from Archaeoglobus fulgidus (strain ATCC 49558 / DSM 4304 / JCM 9628 / NBRC 100126 / VC-16).